The sequence spans 342 residues: Fatty acid desaturase 6 (342 aa).

2 helical membrane passes run 39–59 (GVDC…FLCL) and 63–83 (NILA…TLTV). A Histidine box-1 motif is present at residues 87-91 (HLATH). A helical membrane pass occupies residues 100-120 (WSKILMIFFLEVCTAFSAEFA). Residues 124 to 128 (HVNLH) carry the Histidine box-2 motif. 2 helical membrane passes run 151–171 (YVYM…VALE) and 185–205 (LGFI…VSGF). The Histidine box-3 signature appears at 277–281 (HVEHH).

This sequence belongs to the fatty acid desaturase type 1 family.

It localises to the membrane. It functions in the pathway lipid metabolism; fatty acid metabolism. In Mus musculus (Mouse), this protein is Fatty acid desaturase 6 (Fads6).